The primary structure comprises 260 residues: uncharacterized protein (260 aa).

A signal peptide spans methionine 1 to glycine 22. The N-palmitoyl cysteine moiety is linked to residue cysteine 23. Cysteine 23 carries S-diacylglycerol cysteine lipidation.

The protein belongs to the staphylococcal tandem lipoprotein family.

It is found in the cell membrane. This is an uncharacterized protein from Staphylococcus aureus (strain MRSA252).